The primary structure comprises 1751 residues: Non-reducing polyketide synthase afvB (1751 aa).

The segment at 19–249 (FRRLRLHSKC…PLPVYGGPCH (231 aa)) is N-terminal acylcarrier protein transacylase domain (SAT). One can recognise a Ketosynthase family 3 (KS3) domain in the interval 381–811 (HEKIAVIGMS…GGNTSLLLEE (431 aa)). Residues cysteine 554, histidine 689, and histidine 730 each act as for beta-ketoacyl synthase activity in the active site. Residues 910–1228 (FVFSGQGSFS…SMSALHSAGV (319 aa)) form a malonyl-CoA:ACP transacylase (MAT) domain region. Residues 1291 to 1607 (TALVHHILEE…PRILMSRFFD (317 aa)) form a product template (PT) domain region. Residues 1295 to 1429 (HHILEESFGK…GVVTCGDSHS (135 aa)) are N-terminal hotdog fold. A PKS/mFAS DH domain is found at 1295 to 1603 (HHILEESFGK…LRPLPRILMS (309 aa)). Histidine 1327 serves as the catalytic Proton acceptor; for dehydratase activity. The tract at residues 1456 to 1603 (LASRVSKDLV…LRPLPRILMS (148 aa)) is C-terminal hotdog fold. The active-site Proton donor; for dehydratase activity is aspartate 1514. A disordered region spans residues 1610–1670 (DSQYGQMAQQ…KAPISGSWPN (61 aa)). Polar residues predominate over residues 1612 to 1657 (QYGQMAQQEPSTALPSTPQHTSSAKTTESTPSQQDESDNTSLATPE). Residues 1670–1747 (NANSQLVRDA…DLKAYLEGNQ (78 aa)) enclose the Carrier domain. The residue at position 1707 (serine 1707) is an O-(pantetheine 4'-phosphoryl)serine.

Pantetheine 4'-phosphate is required as a cofactor. Expressed mainly in sclerotia, with expression levels 20-fold and 10-fold greater than the expression levels of this gene found in mycelium and conidia, respectively.

It participates in secondary metabolite biosynthesis. Non-reducing polyketide synthase (NRPKS); part of the gene cluster that mediates the biosynthesis of aflavarin, a bicoumarin that exhibits anti-insectan activity against the fungivorous beetle C.hemipterus. Catalyzes the formation of the aromatic polyketide from acetyl coenzyme A and seven malonyl coenzyme A molecules. This Aspergillus flavus (strain ATCC 200026 / FGSC A1120 / IAM 13836 / NRRL 3357 / JCM 12722 / SRRC 167) protein is Non-reducing polyketide synthase afvB.